Reading from the N-terminus, the 703-residue chain is DNA ligase (703 aa).

Positions 1 to 20 are disordered; it reads MNDNLDLFSGAAPAAPESGA. Residues 9–20 are compositionally biased toward low complexity; sequence SGAAPAAPESGA. NAD(+)-binding positions include 53 to 57, 102 to 103, and E139; these read DGEYD and SI. K141 serves as the catalytic N6-AMP-lysine intermediate. The NAD(+) site is built by R162, E200, K321, and K345. Positions 439, 442, 457, and 463 each coordinate Zn(2+). The BRCT domain occupies 622–703; it reads QTAQPLAGMT…MLALLAGGDR (82 aa).

The protein belongs to the NAD-dependent DNA ligase family. LigA subfamily. The cofactor is Mg(2+). It depends on Mn(2+) as a cofactor.

The enzyme catalyses NAD(+) + (deoxyribonucleotide)n-3'-hydroxyl + 5'-phospho-(deoxyribonucleotide)m = (deoxyribonucleotide)n+m + AMP + beta-nicotinamide D-nucleotide.. Functionally, DNA ligase that catalyzes the formation of phosphodiester linkages between 5'-phosphoryl and 3'-hydroxyl groups in double-stranded DNA using NAD as a coenzyme and as the energy source for the reaction. It is essential for DNA replication and repair of damaged DNA. This chain is DNA ligase, found in Delftia acidovorans (strain DSM 14801 / SPH-1).